A 394-amino-acid polypeptide reads, in one-letter code: Na(+)/H(+) antiporter NhaA (394 aa).

Helical transmembrane passes span Ala14–Leu34, Leu59–Val79, Val95–Phe115, Gly125–Gly145, Val154–Phe174, Val179–Trp199, Leu213–Val233, Gly254–Val274, Ile292–Val312, Ile328–Leu348, and Leu363–Val383.

This sequence belongs to the NhaA Na(+)/H(+) (TC 2.A.33) antiporter family.

The protein localises to the cell inner membrane. It catalyses the reaction Na(+)(in) + 2 H(+)(out) = Na(+)(out) + 2 H(+)(in). Functionally, na(+)/H(+) antiporter that extrudes sodium in exchange for external protons. The sequence is that of Na(+)/H(+) antiporter NhaA from Yersinia pseudotuberculosis serotype IB (strain PB1/+).